The following is a 54-amino-acid chain: UPF0391 membrane protein Rfer_1875 (54 aa).

2 consecutive transmembrane segments (helical) span residues 5–25 (AVVFFVIALIAALFGFGGIAA) and 30–50 (IGKILFIVFAILAVASFLFGL).

The protein belongs to the UPF0391 family.

Its subcellular location is the cell membrane. This is UPF0391 membrane protein Rfer_1875 from Albidiferax ferrireducens (strain ATCC BAA-621 / DSM 15236 / T118) (Rhodoferax ferrireducens).